A 466-amino-acid chain; its full sequence is Ribulose bisphosphate carboxylase large chain (466 aa).

At Lys5 the chain carries N6,N6,N6-trimethyllysine. Substrate contacts are provided by Asn114 and Thr164. Lys166 acts as the Proton acceptor in catalysis. Lys168 contacts substrate. Residues Lys192, Asp194, and Glu195 each coordinate Mg(2+). Lys192 bears the N6-carboxylysine mark. His285 (proton acceptor) is an active-site residue. 3 residues coordinate substrate: Arg286, His318, and Ser370.

It belongs to the RuBisCO large chain family. Type I subfamily. In terms of assembly, heterohexadecamer of 8 large chains and 8 small chains; disulfide-linked. The disulfide link is formed within the large subunit homodimers. Requires Mg(2+) as cofactor. Post-translationally, the disulfide bond which can form in the large chain dimeric partners within the hexadecamer appears to be associated with oxidative stress and protein turnover.

The protein localises to the plastid. It localises to the chloroplast. It catalyses the reaction 2 (2R)-3-phosphoglycerate + 2 H(+) = D-ribulose 1,5-bisphosphate + CO2 + H2O. The catalysed reaction is D-ribulose 1,5-bisphosphate + O2 = 2-phosphoglycolate + (2R)-3-phosphoglycerate + 2 H(+). Its function is as follows. RuBisCO catalyzes two reactions: the carboxylation of D-ribulose 1,5-bisphosphate, the primary event in carbon dioxide fixation, as well as the oxidative fragmentation of the pentose substrate in the photorespiration process. Both reactions occur simultaneously and in competition at the same active site. The protein is Ribulose bisphosphate carboxylase large chain of Aesculus pavia (Red buckeye).